Consider the following 128-residue polypeptide: NHP2-like protein 1 (128 aa).

Residues 36-48 (RKGANEATKTLNR) are interaction with U4 snRNA and U4atac snRNA. The tract at residues 96-128 (SRPVIACAVTIKEGSQLKPQIQSLQQSIERLLV) is important for U4 snRNA-binding.

This sequence belongs to the eukaryotic ribosomal protein eL8 family. In terms of assembly, identified in the spliceosome B complex. Component of the U4/U6-U5 tri-snRNP complex. Part of the small subunit (SSU) processome, composed of more than 70 proteins and the RNA chaperone small nucleolar RNA (snoRNA) U3.

It localises to the nucleus. Its subcellular location is the nucleolus. In terms of biological role, part of the small subunit (SSU) processome, first precursor of the small eukaryotic ribosomal subunit. During the assembly of the SSU processome in the nucleolus, many ribosome biogenesis factors, an RNA chaperone and ribosomal proteins associate with the nascent pre-rRNA and work in concert to generate RNA folding, modifications, rearrangements and cleavage as well as targeted degradation of pre-ribosomal RNA by the RNA exosome. Involved in pre-mRNA splicing as component of the spliceosome. Binds to the 5'-stem-loop of U4 snRNA and thereby contributes to spliceosome assembly. The protein undergoes a conformational change upon RNA-binding. Core component of box C/D small nucleolar ribonucleoprotein (snoRNP) complexes that function in methylation of multiple sites on ribosomal RNAs (rRNAs) and messenger RNAs (mRNAs). This is NHP2-like protein 1 from Xenopus tropicalis (Western clawed frog).